The primary structure comprises 248 residues: 2,3-bisphosphoglycerate-dependent phosphoglycerate mutase (248 aa).

Substrate is bound by residues 8–15 (RHGESTWN), 21–22 (TG), R60, 87–90 (ERHY), K98, 114–115 (RR), and 183–184 (GN). H9 functions as the Tele-phosphohistidine intermediate in the catalytic mechanism. Residue E87 is the Proton donor/acceptor of the active site.

Belongs to the phosphoglycerate mutase family. BPG-dependent PGAM subfamily. As to quaternary structure, homodimer.

The enzyme catalyses (2R)-2-phosphoglycerate = (2R)-3-phosphoglycerate. Its pathway is carbohydrate degradation; glycolysis; pyruvate from D-glyceraldehyde 3-phosphate: step 3/5. In terms of biological role, catalyzes the interconversion of 2-phosphoglycerate and 3-phosphoglycerate. This chain is 2,3-bisphosphoglycerate-dependent phosphoglycerate mutase, found in Paraburkholderia phymatum (strain DSM 17167 / CIP 108236 / LMG 21445 / STM815) (Burkholderia phymatum).